Here is a 520-residue protein sequence, read N- to C-terminus: Bifunctional dihydrofolate reductase-thymidylate synthase (520 aa).

Residues 26–229 (AFSIVVALDM…LEFEICKYVP (204 aa)) form the DHFR domain. Valine 30 contributes to the substrate binding site. NADP(+) contacts are provided by residues alanine 32 and 38-44 (GIGDGES). Position 52 (aspartate 52) interacts with substrate. NADP(+) contacts are provided by residues 81 to 83 (RKT), 102 to 105 (LSSK), and 157 to 164 (GGAQVYAD). The substrate site is built by tyrosine 162 and threonine 180. Residues 234-520 (ERQYLELIDR…HPAIKMEMAV (287 aa)) are thymidylate synthase. Arginine 254 is a binding site for dUMP. Cysteine 400 is an active-site residue. DUMP contacts are provided by residues histidine 401, 421–425 (QRSCD), asparagine 433, and 463–465 (HVY).

It in the N-terminal section; belongs to the dihydrofolate reductase family. In the C-terminal section; belongs to the thymidylate synthase family.

The catalysed reaction is (6S)-5,6,7,8-tetrahydrofolate + NADP(+) = 7,8-dihydrofolate + NADPH + H(+). It carries out the reaction dUMP + (6R)-5,10-methylene-5,6,7,8-tetrahydrofolate = 7,8-dihydrofolate + dTMP. It functions in the pathway cofactor biosynthesis; tetrahydrofolate biosynthesis; 5,6,7,8-tetrahydrofolate from 7,8-dihydrofolate: step 1/1. Functionally, bifunctional enzyme. Involved in de novo dTMP biosynthesis. Key enzyme in folate metabolism. Catalyzes an essential reaction for de novo glycine and purine synthesis, DNA precursor synthesis, and for the conversion of dUMP to dTMP. This Leishmania major protein is Bifunctional dihydrofolate reductase-thymidylate synthase.